A 1148-amino-acid chain; its full sequence is MCSSINEGPYNSPTFGKSLSLKVDGGFNAVSINPSGRDIVLASRQGLYIIDLDDPFTPPRWLHHITPWQVADVQWSPHPAKPYWIVSTSNQKAIIWNLAKSSSNAIEFVLHGHSRAITDINFNPQHPDVLATCSVDTYVHAWDMRSPHRPFYSTSSWRSAASQVKWNYKDPNVLASSHGNDIFVWDLRKGSTPLCSLKGHVSSVNSIDFNRFKYSEIMSSSNDGTVKFWDYSKSTTESKRTVTTNFPIWRGRYLPFGEGYCIMPMVGGNNAVYLINLCDDDDSEQNKKTKLQPIYAFKGHSDRVIDFLWRSRHTCDGDYDDREFQLVTWSKDCDLKLWPISDSIYGKVNFDRGKRLEEKLPDYDYCSYNKEPENRENVQKNEFRRLRENFVTTSGLKKNKTNHITWLSGIRMNSATSQEDLFNETKIQNLGEEVSAIGHKFPKVVFEKISVSTRELCLTLNGPWSEENPDDYIFLRISINFPLNYPNKGDPPKFTIEENSNLTMSKRQEILSNLATIGQKYTDSNLYCLEPCIRFVLGEKVSLEDIEEGQEPLLNFDIADHIDFEELSSLDSSYSDSQNPENLSSQSDIESYKEALVFPDTSNQGLDFGRNLALDTTPVPNGCGSCWTATGELFCFFANEKKPEKKQNAIIKLSQKEAGVEKHPFKIEPQVLYDKEVDSSVITAADELKARPKRYVDTLGLGGGTNGDSRTYFDDETSSDDSFDSVADDWDDILRNDIIVRTKIPILRGNFKAFSSVHSESGKTVESTKKNKNLVISKNFSSLLSDRKELALEYLFMDATPEGFARNNALVAEKFDLDEISHCWQILSDMLIDQSDYDPYTTIWNNHPMGIKWFIKEAIVYFERQQNLQMLAMLCCVILSARRKKIPARYYGQELENMEGTIVFNDNESQNTSFWKGSDAFSTRSRSSTVTPNFYGNHLRGKNIHGGDNSSIRSDDHHARLRTHNTLNGSSKFTEPAQKQGSRAISSSPFHSRMPDIKVELLHDDIIEAYEQEDLLHLEVSDIPKFQTYIYQYSKLLFRWGLPLERVKILKVSTDFRSSYSSQGIPPNNNKKSPYNGVLTHWIENNEFGEEKFLARNCNYCDLRVTRSSFICGNCQHVLHSSCARIWWEIGDECPSGCGCNCPEMFDA.

WD repeat units lie at residues 63 to 106 (HHIT…SNAI), 112 to 152 (GHSR…RPFY), 156 to 195 (SWRS…TPLC), 199 to 239 (GHVS…TESK), and 299 to 348 (GHSD…YGKV). The region spanning 432–543 (EEVSAIGHKF…RFVLGEKVSL (112 aa)) is the RWD domain. Serine 759 bears the Phosphoserine mark. Positions 963-990 (THNTLNGSSKFTEPAQKQGSRAISSSPF) are disordered. Over residues 964–990 (HNTLNGSSKFTEPAQKQGSRAISSSPF) the composition is skewed to polar residues.

This sequence belongs to the WD repeat WDR59 family. Component of the SEA complex composed of at least IML1/SEA1, RTC1/SEA2, MTC5/SEA3, NPR2, NPR3, SEA4, SEC13 and SEH1.

The protein resides in the vacuole membrane. Its function is as follows. Component of the SEA complex which coats the vacuolar membrane and is involved in intracellular trafficking, autophagy, response to nitrogen starvation, and amino acid biogenesis. May be involved in telomere capping. This is Maintenance of telomere capping protein 5 (MTC5) from Saccharomyces cerevisiae (strain ATCC 204508 / S288c) (Baker's yeast).